Consider the following 1804-residue polypeptide: Obscurin-like protein 1 (1804 aa).

Position 10 is a phosphoserine (Ser-10). 4 Ig-like domains span residues 12 to 100 (PCFL…AAVT), 128 to 225 (PKFL…ALLQ), 241 to 330 (PKPV…QTLS), and 339 to 425 (PRLR…ANVT). The interaction with TTN stretch occupies residues 17 to 19 (FPR). A disulfide bridge connects residues Cys-33 and Cys-84. The segment at 85 to 94 (RARNAAGEAY) is interaction with TTN. The cysteines at positions 149 and 209 are disulfide-linked. Residues 227–249 (HQPRESPPQDPDENPKPVLEPLK) form a disordered region. Intrachain disulfides connect Cys-267/Cys-319 and Cys-362/Cys-412. The Fibronectin type-III domain occupies 517–615 (PPGPPVMVEM…FNGSAHLVPT (99 aa)). 10 Ig-like domains span residues 720–800 (PQDK…FGVT), 804–891 (PPVH…FTVT), 902–982 (PSSE…FTIT), 986–1075 (PPVR…VTVT), 1078–1165 (PERI…FNVS), 1176–1261 (PEAA…FNVQ), 1266–1442 (PPVK…ARLS), 1536–1621 (PVTI…ARLT), 1625–1694 (REVS…EDTG), and 1702–1798 (PAQS…ADTQ). Intrachain disulfides connect Cys-738-Cys-788, Cys-829-Cys-879, Cys-920-Cys-970, Cys-1011-Cys-1061, Cys-1103-Cys-1153, Cys-1195-Cys-1245, Cys-1289-Cys-1430, and Cys-1558-Cys-1608.

In terms of assembly, component of the 3M complex, composed of core components CUL7, CCDC8 and OBSL1. Interacts with CCDC8. Interacts with CUL7; the interaction is direct. Interacts with FBXW8. Interacts (via N-terminal Ig-like domain) with TTN/titin (via C-terminal Ig-like domain); the interaction is direct.

Its subcellular location is the cytoplasm. The protein localises to the perinuclear region. It localises to the golgi apparatus. In terms of biological role, core component of the 3M complex, a complex required to regulate microtubule dynamics and genome integrity. It is unclear how the 3M complex regulates microtubules, it could act by controlling the level of a microtubule stabilizer. Acts as a regulator of the Cul7-RING(FBXW8) ubiquitin-protein ligase, playing a critical role in the ubiquitin ligase pathway that regulates Golgi morphogenesis and dendrite patterning in brain. Required to localize CUL7 to the Golgi apparatus in neurons. This chain is Obscurin-like protein 1 (Obsl1), found in Mus musculus (Mouse).